We begin with the raw amino-acid sequence, 36 residues long: MEVNILAFIATALFILVPTAFLLIIYVKTESQNKKN.

Residues 5 to 25 (ILAFIATALFILVPTAFLLII) form a helical membrane-spanning segment.

Belongs to the PsbM family. As to quaternary structure, PSII is composed of 1 copy each of membrane proteins PsbA, PsbB, PsbC, PsbD, PsbE, PsbF, PsbH, PsbI, PsbJ, PsbK, PsbL, PsbM, PsbT, PsbX, PsbY, PsbZ, Psb30/Ycf12, at least 3 peripheral proteins of the oxygen-evolving complex and a large number of cofactors. It forms dimeric complexes.

Its subcellular location is the plastid. It is found in the chloroplast thylakoid membrane. Functionally, one of the components of the core complex of photosystem II (PSII). PSII is a light-driven water:plastoquinone oxidoreductase that uses light energy to abstract electrons from H(2)O, generating O(2) and a proton gradient subsequently used for ATP formation. It consists of a core antenna complex that captures photons, and an electron transfer chain that converts photonic excitation into a charge separation. This subunit is found at the monomer-monomer interface. This Panax ginseng (Korean ginseng) protein is Photosystem II reaction center protein M.